The sequence spans 545 residues: Chaperonin GroEL (545 aa).

ATP is bound by residues 30–33 (TMGP), lysine 51, 87–91 (DGTTT), glycine 416, 479–481 (NAA), and aspartate 495.

This sequence belongs to the chaperonin (HSP60) family. In terms of assembly, forms a cylinder of 14 subunits composed of two heptameric rings stacked back-to-back. Interacts with the co-chaperonin GroES.

The protein resides in the cytoplasm. It carries out the reaction ATP + H2O + a folded polypeptide = ADP + phosphate + an unfolded polypeptide.. Functionally, together with its co-chaperonin GroES, plays an essential role in assisting protein folding. The GroEL-GroES system forms a nano-cage that allows encapsulation of the non-native substrate proteins and provides a physical environment optimized to promote and accelerate protein folding. This is Chaperonin GroEL from Nautilia profundicola (strain ATCC BAA-1463 / DSM 18972 / AmH).